Reading from the N-terminus, the 1426-residue chain is Protein RhsD (1426 aa).

The tract at residues 256-285 (AEEARTSSLSSSDSSRPLSASAFPDTLPGT) is disordered. Residues 262–277 (SSLSSSDSSRPLSASA) are compositionally biased toward low complexity. Residues 320–1197 (YTEAGELLAV…LNEENPHHVY (878 aa)) are 28 X approximate tandem repeats. Tandem repeats lie at residues 334–356 (NTQV…HRYA), 357–378 (GRPE…LNPA), 379–421 (GLSY…ELAD), 422–442 (GSVT…TDAA), 443–464 (GRRT…TTPD), 465–485 (GRET…VSPD), 486–506 (GLES…TSRS), 507–529 (GETV…TDAT), 530–550 (GSTR…TDCS), 551–571 (GYQT…HREE), 572–592 (GISL…KDAQ), 593–613 (GRET…ITPD), 614–633 (GNRS…TTQG), 634–654 (GLTR…TNEN), 655–675 (GSHS…GGFD), 676–695 (GRTQ…SEDE), 696–715 (GLVI…RTVN), 716–738 (GEPA…HLSE), 739–762 (GHRV…QTVE), 812–832 (GGTP…VRSF), 833–861 (GSMA…HLNS), 862–882 (LVYD…ISGP), 883–905 (RQTR…LAPD), 906–941 (LDIR…NRIA), 942–970 (EDAH…VIRT), 971–995 (DDER…IQHG), and 996–1030 (EPLV…MSLS). The span at 1073–1085 (ENGEREKAQRRSL) shows a compositional bias: basic and acidic residues. Residues 1073–1097 (ENGEREKAQRRSLAETLQQEGSENG) are disordered. The stretch at 1173–1197 (GNTAWSAEYDEWGNQLNEENPHHVY) is repeat 28.

Belongs to the RHS family.

Functionally, rhs elements have a nonessential function. They may play an important role in the natural ecology of the cell. In Escherichia coli (strain K12), this protein is Protein RhsD (rhsD).